The chain runs to 357 residues: Velvet complex subunit 2 (357 aa).

The 310-residue stretch at 32–341 (RRAERKYKLE…AQQGIKIPIR (310 aa)) folds into the Velvet domain.

The protein belongs to the velvet family. VelB subfamily. As to quaternary structure, component of the heterotrimeric velvet complex composed of LAE1, VEL1 and VEL2; VEL1A acting as a bridging protein between LAE1 and VEL2. Forms a heterodimeric complex with VOS1; the formation of the VEL2-VOS1 complex is light-dependent.

It is found in the nucleus. The protein localises to the cytoplasm. Functionally, component of the velvet transcription factor complex that controls sexual/asexual developmental ratio in response to light, promoting sexual development in the darkness while stimulating asexual sporulation under illumination. The velvet complex acts as a global regulator for secondary metabolite gene expression. Component of the VEL2-VOS1 heterodimeric complex that plays a dual role in activating genes associated with spore maturation and repressing certain development-associated genes. The complex binds DNA through the DNA-binding domain of VOS1 that recognizes an 11-nucleotide consensus sequence 5'-CTGGCCGCGGC-3' consisting of two motifs in the promoters of key developmental regulatory genes. The VEL2-VOS1 complex is required for normal pseudothecium development and regulates asexual spore compartmentalization, pigmentation and germination. This Cochliobolus heterostrophus (strain C5 / ATCC 48332 / race O) (Southern corn leaf blight fungus) protein is Velvet complex subunit 2.